The sequence spans 79 residues: Envelope small membrane protein (79 aa).

The Virion surface portion of the chain corresponds to 1 to 16 (MYDIVGTNNSILIANV). A helical membrane pass occupies residues 17–37 (LVLIIICLLVVIVGCALLLIL). Residues 38–75 (QFVFGVCGFVFKFVCKPTILVYNKFRNESLLNEREELL) are Intravirion-facing.

This sequence belongs to the betacoronaviruses E protein family. As to quaternary structure, homopentamer. Interacts with membrane protein M in the budding compartment of the host cell, which is located between endoplasmic reticulum and the Golgi complex. Interacts with Nucleoprotein.

Its subcellular location is the host Golgi apparatus membrane. Its function is as follows. Plays a central role in virus morphogenesis and assembly. Acts as a viroporin and self-assembles in host membranes forming pentameric protein-lipid pores that allow ion transport. Also plays a role in the induction of apoptosis. The chain is Envelope small membrane protein from Rousettus leschenaultii (Leschenault's rousette).